We begin with the raw amino-acid sequence, 333 residues long: NADH-quinone oxidoreductase subunit H (333 aa).

8 consecutive transmembrane segments (helical) span residues 8-28 (VLAA…YLVW), 75-95 (ILFM…FVTI), 108-128 (IGLL…LLAG), 154-174 (MLIT…IEIV), 191-211 (PGLF…CSLA), 251-271 (IVIG…CPFG), 273-293 (FPGV…FIWI), and 312-332 (ILIP…KVFA).

This sequence belongs to the complex I subunit 1 family. In terms of assembly, NDH-1 is composed of 14 different subunits. Subunits NuoA, H, J, K, L, M, N constitute the membrane sector of the complex.

The protein resides in the cell inner membrane. It catalyses the reaction a quinone + NADH + 5 H(+)(in) = a quinol + NAD(+) + 4 H(+)(out). NDH-1 shuttles electrons from NADH, via FMN and iron-sulfur (Fe-S) centers, to quinones in the respiratory chain. The immediate electron acceptor for the enzyme in this species is believed to be ubiquinone. Couples the redox reaction to proton translocation (for every two electrons transferred, four hydrogen ions are translocated across the cytoplasmic membrane), and thus conserves the redox energy in a proton gradient. This subunit may bind ubiquinone. This is NADH-quinone oxidoreductase subunit H from Desulfotalea psychrophila (strain LSv54 / DSM 12343).